We begin with the raw amino-acid sequence, 291 residues long: Meteorin (291 aa).

A signal peptide spans Met1–Ala21. Intrachain disulfides connect Cys28–Cys49, Cys80–Cys116, Cys169–Cys240, Cys172–Cys264, and Cys182–Cys286.

Belongs to the meteorin family. Monomer.

It localises to the secreted. Its function is as follows. Involved in both glial cell differentiation and axonal network formation during neurogenesis. Promotes astrocyte differentiation and transforms cerebellar astrocytes into radial glia. Also induces axonal extension in small and intermediate neurons of sensory ganglia by activating nearby satellite glia. The polypeptide is Meteorin (Metrn) (Rattus norvegicus (Rat)).